The primary structure comprises 385 residues: Spermidine/putrescine import ATP-binding protein PotA (385 aa).

An ABC transporter domain is found at 27–257 (ASFRAVSKHY…PANLFVAQFA (231 aa)). Residue 59–66 (GPSGCGKT) coordinates ATP.

It belongs to the ABC transporter superfamily. Spermidine/putrescine importer (TC 3.A.1.11.1) family. As to quaternary structure, the complex is composed of two ATP-binding proteins (PotA), two transmembrane proteins (PotB and PotC) and a solute-binding protein (PotD).

It localises to the cell inner membrane. It catalyses the reaction ATP + H2O + polyamine-[polyamine-binding protein]Side 1 = ADP + phosphate + polyamineSide 2 + [polyamine-binding protein]Side 1.. Functionally, part of the ABC transporter complex PotABCD involved in spermidine/putrescine import. Responsible for energy coupling to the transport system. The chain is Spermidine/putrescine import ATP-binding protein PotA from Methylococcus capsulatus (strain ATCC 33009 / NCIMB 11132 / Bath).